The sequence spans 89 residues: UPF0237 protein LMOf2365_0562 (89 aa).

Residues 4 to 78 form the ACT domain; sequence VLTVIGKDNV…EDLQVKIHIQ (75 aa).

The protein belongs to the UPF0237 family.

This is UPF0237 protein LMOf2365_0562 from Listeria monocytogenes serotype 4b (strain F2365).